Reading from the N-terminus, the 197-residue chain is Phosphoheptose isomerase (197 aa).

The SIS domain maps to 40–197 (CIASIAQGGK…LVEHSIFGKQ (158 aa)). Substrate is bound at residue 55–57 (NGG). Residues His-64 and Glu-68 each contribute to the Zn(2+) site. Residues Glu-68, 97–98 (ND), 123–125 (STS), Ser-128, and Gln-175 contribute to the substrate site. Zn(2+) is bound by residues Gln-175 and His-183.

This sequence belongs to the SIS family. GmhA subfamily. As to quaternary structure, homotetramer. It depends on Zn(2+) as a cofactor.

The protein resides in the cytoplasm. The enzyme catalyses 2 D-sedoheptulose 7-phosphate = D-glycero-alpha-D-manno-heptose 7-phosphate + D-glycero-beta-D-manno-heptose 7-phosphate. The protein operates within carbohydrate biosynthesis; D-glycero-D-manno-heptose 7-phosphate biosynthesis; D-glycero-alpha-D-manno-heptose 7-phosphate and D-glycero-beta-D-manno-heptose 7-phosphate from sedoheptulose 7-phosphate: step 1/1. Its pathway is capsule biogenesis; capsule polysaccharide biosynthesis. In terms of biological role, catalyzes the isomerization of sedoheptulose 7-phosphate in D-glycero-D-manno-heptose 7-phosphate. This Burkholderia mallei (strain ATCC 23344) protein is Phosphoheptose isomerase.